A 161-amino-acid chain; its full sequence is Nucleotide-binding protein swp_1151 (161 aa).

Belongs to the YajQ family.

Its function is as follows. Nucleotide-binding protein. This chain is Nucleotide-binding protein swp_1151, found in Shewanella piezotolerans (strain WP3 / JCM 13877).